The chain runs to 437 residues: GTPase Der (437 aa).

EngA-type G domains lie at 2–167 and 180–356; these read ATVL…EKKG and IRVA…NSLF. GTP contacts are provided by residues 8–15, 55–59, 118–121, 186–193, 233–237, and 299–302; these read GKSNVGKS, DTCGI, NKSE, GRPNAGKS, DTAGL, and NKID. In terms of domain architecture, KH-like spans 357–437; it reads YRVQTSAVNA…PIFLKFKNRH (81 aa).

This sequence belongs to the TRAFAC class TrmE-Era-EngA-EngB-Septin-like GTPase superfamily. EngA (Der) GTPase family. In terms of assembly, associates with the 50S ribosomal subunit.

Functionally, GTPase that plays an essential role in the late steps of ribosome biogenesis. This chain is GTPase Der, found in Thermosipho melanesiensis (strain DSM 12029 / CIP 104789 / BI429).